Consider the following 197-residue polypeptide: Nascent polypeptide-associated complex subunit alpha (197 aa).

Basic and acidic residues predominate over residues 1-18; it reads MTGSTETRHNEKDVKEPQ. A disordered region spans residues 1–30; it reads MTGSTETRHNEKDVKEPQVDSDADSDNEAI. The segment covering 19-28 has biased composition (acidic residues); the sequence is VDSDADSDNE. The NAC-A/B domain occupies 58–123; it reads SRSEKKARKL…AKIEDLTQHA (66 aa). Residues 134–155 form a disordered region; that stretch reads TREAPQLKTVEEDDNEDVEEDS. Residues 144–155 are compositionally biased toward acidic residues; sequence EEDDNEDVEEDS. In terms of domain architecture, UBA spans 158-195; sequence IEEKDIELVISQANTTRNKAIRALKDADNDIVNAIMSL.

This sequence belongs to the NAC-alpha family.

Its function is as follows. May promote appropriate targeting of ribosome-nascent polypeptide complexes. In Caenorhabditis briggsae, this protein is Nascent polypeptide-associated complex subunit alpha.